A 130-amino-acid polypeptide reads, in one-letter code: Small ribosomal subunit protein uS8 (130 aa).

It belongs to the universal ribosomal protein uS8 family. In terms of assembly, part of the 30S ribosomal subunit. Contacts proteins S5 and S12.

Its function is as follows. One of the primary rRNA binding proteins, it binds directly to 16S rRNA central domain where it helps coordinate assembly of the platform of the 30S subunit. The sequence is that of Small ribosomal subunit protein uS8 from Shewanella denitrificans (strain OS217 / ATCC BAA-1090 / DSM 15013).